The chain runs to 74 residues: Transcription attenuation protein MtrB (74 aa).

Belongs to the MtrB family. Oligomer of 11 identical subunits arranged in doughnut-like structure.

Required for transcription attenuation control in the Trp operon. This trans-acting factor seems to recognize a 10 bases nucleotide sequence in the Trp leader transcript causing transcription termination. Binds the leader RNA only in presence of L-tryptophan. This is Transcription attenuation protein MtrB from Geobacillus sp. (strain WCH70).